The sequence spans 144 residues: Protein BUD31 homolog (144 aa).

Positions 2–10 (PKVRRSRKP) match the Nuclear localization signal motif.

The protein belongs to the BUD31 (G10) family.

The protein localises to the nucleus. The polypeptide is Protein BUD31 homolog (Branchiostoma belcheri (Amphioxus)).